The primary structure comprises 452 residues: MALNKKLISLLLLIFIILNIVNSHQQEDCDDDDEDIGISAERSERRSVKNSNDGSNFYNLNDYYTPENWNYYSGSFATKDCRDASYITIPLGTTGGLDEGNLSSFLLTKKGSNLFIALDAGTVWQGVRRLTTFKYFNTLFNITYPSWAVLPEQRTSWFLKNHVMSYFIGHSHLDHVGGLILVSPEDYLAKNWIDVQPPINNGIMGLIRKLGFKPTDFTSSSILQKKTIMGLPSTINSISTNLFNNQVWPNLPSFGRYQYFSLASGIEYPFTELVPYNATTMSLVANEFPFSVKVKPFELCHDNLISTSFLFTDSISGEQIAFFSDTGVPSSVACDWEGKIYAVWKQIKIDKLKAIYIETSFPNNTPDSAMFGHLRPRDVMKLMDQLLVQSIQTSPPMTNLKHVKLIIEHIKPQVAEDPNGWTTQRVIYQQLKEANNNGVRIIIPNQGDPICI.

The N-terminal stretch at Met1–Ser23 is a signal peptide. The propeptide occupies His24–Lys49. N-linked (GlcNAc...) asparagine glycosylation is found at Asn101, Asn141, and Asn277.

The protein belongs to the cyclic nucleotide phosphodiesterase class-II family.

The protein resides in the secreted. It is found in the extracellular space. It localises to the cell surface. The enzyme catalyses 3',5'-cyclic AMP + H2O = AMP + H(+). The catalysed reaction is 3',5'-cyclic GMP + H2O = GMP + H(+). With respect to regulation, inhibited by dithiotreitol (DTT). In terms of biological role, phosphodiesterase which displays a preference for cAMP over cGMP. Involved in the degradation of extracellular cAMP. Maintains the responsiveness of cells to the chemoattractant cAMP during the aggregation phase of development. In Dictyostelium discoideum (Social amoeba), this protein is cAMP/cGMP-dependent 3',5'-cAMP/cGMP phosphodiesterase A (pdsA).